The chain runs to 649 residues: Mitochondrial Rho GTPase 1 (649 aa).

The Cytoplasmic segment spans residues 1–623; sequence MTKETIRVVI…KPTNIDYSSA (623 aa). Residues 3-176 form the Miro 1 domain; it reads KETIRVVICG…FYLCQRSISY (174 aa). GTP is bound by residues 12-19, 61-63, and 115-118; these read GDDGVGKT, DTD, and NKCD. 2 EF-hand domains span residues 192–227 and 320–355; these read SAVA…CFGK and KGYR…TPGL. Positions 205, 207, 209, 216, 333, 335, 337, and 344 each coordinate Ca(2+). Residues 436–601 enclose the Miro 2 domain; the sequence is RKVFNCFVVG…FKKIIQASLE (166 aa). GTP is bound by residues 445–452, 481–485, and 550–553; these read GKRNSGKS, EVTGD, and LKAD. The chain crosses the membrane as a helical; Anchor for type IV membrane protein span at residues 624–644; that stretch reads VILGSSIGFLALFSYTMIKLL. The Mitochondrial intermembrane portion of the chain corresponds to 645–649; sequence KPTQQ.

This sequence belongs to the mitochondrial Rho GTPase family.

The protein resides in the mitochondrion outer membrane. Mitochondrial GTPase involved in mitochondrial trafficking. Probably involved in control of anterograde transport of mitochondria and their subcellular distribution. The sequence is that of Mitochondrial Rho GTPase 1 (GEM1) from Candida glabrata (strain ATCC 2001 / BCRC 20586 / JCM 3761 / NBRC 0622 / NRRL Y-65 / CBS 138) (Yeast).